The primary structure comprises 918 residues: Sarcosine dehydrogenase, mitochondrial (918 aa).

The span at Met1–Ala13 shows a compositional bias: low complexity. Residues Met1–Gly22 constitute a mitochondrion transit peptide. Residues Met1–Val40 are disordered. The residue at position 38 (Lys38) is an N6-succinyllysine. Tele-8alpha-FAD histidine is present on His108. An N6-acetyllysine; alternate modification is found at Lys173. At Lys173 the chain carries N6-succinyllysine; alternate. Lys377 and Lys391 each carry N6-succinyllysine. Residues Lys559 and Lys775 each carry the N6-acetyllysine modification. Residue Tyr777 is modified to Phosphotyrosine. 3 positions are modified to N6-acetyllysine; alternate: Lys802, Lys884, and Lys904. An N6-succinyllysine; alternate mark is found at Lys802, Lys884, and Lys904.

Belongs to the GcvT family. The cofactor is FAD. As to expression, expressed in pancreas, liver and kidney.

Its subcellular location is the mitochondrion matrix. It catalyses the reaction (6S)-5,6,7,8-tetrahydrofolyl-(gamma-L-Glu)(n) + sarcosine + oxidized [electron-transfer flavoprotein] + H(+) = (6R)-5,10-methylenetetrahydrofolyl-(gamma-L-Glu)(n) + reduced [electron-transfer flavoprotein] + glycine. The protein operates within amine and polyamine degradation; sarcosine degradation; formaldehyde and glycine from sarcosine: step 1/1. In terms of biological role, catalyzes the last step of the oxidative degradation of choline to glycine. Converts sarcosine into glycine. This Homo sapiens (Human) protein is Sarcosine dehydrogenase, mitochondrial.